The chain runs to 577 residues: MSETVTQTETDQRPATARSLGAEEKEAKSDEQFQQERTIKGFRWFIVIISILSSVTLYSLDNTIVADIQPQIINTFDELDKLPWLSVAFLVACVATNSIWSKIYSQLNAKWLYLFCVVLFEVGSAMCGAAPTINTLIGGRALAGLGGAGLYVGVMTLLSVNTSKRERPMYIGMTGLTWGVGTVLGPIVGGGFAVSKVGWRWSFYINRECRPSVQPIRPLTVPPVFFAAVAIPIYLFMLPSFDPRPGVSYKERLAQLDYLGTILMIGACVSGVMAINFGGQIYPWDSGQTISCFVVSGVLFIVFGLQQWYCIGTTKENRTFPCQFLARPAFIILFVQTASVATVFFVPIYFVPLFFQFTRNDSAIDAGVRLLPLVCFIVAAMILNGALMSKFGYYMPWYLVGGCLSLVGSVLMYTIKLGTSTANIYGYMIILGVGGGMYAQASFAVAQGKARPREIPVATGFISLAQLTGGTIALAIANSVFLEKASAGIMAVVPDASKETVQSAISGASSSFFQTLDPDVREAVLAAVTHAISQVYILPITGAAMSISLAIFMPREKLFVASDSGDRDGVTPLGAMG.

The segment at Met1–Gln32 is disordered. Basic and acidic residues predominate over residues Gly21–Glu31. Helical transmembrane passes span Phe45–Val65, Trp84–Tyr104, Trp111–Pro131, Ala141–Asn161, Thr174–Val194, Pro218–Leu238, Leu259–Gly279, and Cys292–Gly312. Asn317 is a glycosylation site (N-linked (GlcNAc...) asparagine). The chain crosses the membrane as a helical span at residues Phe330–Phe350. Asn360 is a glycosylation site (N-linked (GlcNAc...) asparagine). A run of 5 helical transmembrane segments spans residues Ala363 to Leu383, Met395 to Ile415, Gly426 to Ala446, Val457 to Ala477, and Ile532 to Phe552.

It belongs to the major facilitator superfamily. TCR/Tet family.

The protein localises to the membrane. Functionally, MFS-type transporter; part of the gene cluster that mediates the biosynthesis of pleosporalin A, ascomycone A, as well as a third cryptic naphthoquinone derived pigment, all responsible for the coloration of conidia. Seems not to be involved in pigment biosynthesis although its expression is regulated by the cluster-specific transcription factor pgmR. This is MFS-type transporter pgmG from Aspergillus terreus (strain NIH 2624 / FGSC A1156).